The sequence spans 581 residues: Metal transporter Nramp7.1 (581 aa).

Residues asparagine 11 and asparagine 19 are each glycosylated (N-linked (GlcNAc...) asparagine). A run of 7 helical transmembrane segments spans residues 57–77 (FLSY…PGNL), 90–110 (ELLW…SLAA), 146–166 (YCLW…EGII), 181–201 (LLIG…WVGV), 224–244 (LLIA…MSYV), 270–290 (IALL…ALVL), and 307–327 (YFLI…LAVI). N-linked (GlcNAc...) asparagine glycosylation is present at asparagine 338. Transmembrane regions (helical) follow at residues 370-390 (IYAI…TYAG), 409-429 (LVTR…GGSS), 434-454 (LIII…FALI), 473-493 (IYII…NIYY), and 513-533 (VFIG…VIYL). The disordered stretch occupies residues 551–581 (PQQQANMENGLGPEMERVPYREDLADIPLPE). Positions 564-574 (EMERVPYREDL) are enriched in basic and acidic residues.

This sequence belongs to the NRAMP (TC 2.A.55) family.

Its subcellular location is the membrane. Probable divalent metal transporter. This Populus trichocarpa (Western balsam poplar) protein is Metal transporter Nramp7.1.